Reading from the N-terminus, the 320-residue chain is o-succinylbenzoate synthase (320 aa).

The active-site Proton donor is Lys133. Residues Asp161, Glu190, and Asp213 each coordinate Mg(2+). The Proton acceptor role is filled by Lys235.

The protein belongs to the mandelate racemase/muconate lactonizing enzyme family. MenC type 1 subfamily. Requires a divalent metal cation as cofactor.

It catalyses the reaction (1R,6R)-6-hydroxy-2-succinyl-cyclohexa-2,4-diene-1-carboxylate = 2-succinylbenzoate + H2O. It functions in the pathway quinol/quinone metabolism; 1,4-dihydroxy-2-naphthoate biosynthesis; 1,4-dihydroxy-2-naphthoate from chorismate: step 4/7. It participates in quinol/quinone metabolism; menaquinone biosynthesis. Its function is as follows. Converts 2-succinyl-6-hydroxy-2,4-cyclohexadiene-1-carboxylate (SHCHC) to 2-succinylbenzoate (OSB). This Escherichia coli (strain K12 / MC4100 / BW2952) protein is o-succinylbenzoate synthase.